A 905-amino-acid polypeptide reads, in one-letter code: uncharacterized protein (905 aa).

WD repeat units lie at residues 42-82 (RSLK…FQAV), 86-128 (GYAR…SDPK), 136-175 (STLD…DSVS), and 177-217 (VNTQ…SDNY). Phosphoserine occurs at positions 394 and 397.

It belongs to the WD repeat mio family.

This is an uncharacterized protein from Schizosaccharomyces pombe (strain 972 / ATCC 24843) (Fission yeast).